A 244-amino-acid chain; its full sequence is Glucosamine-6-phosphate deaminase (244 aa).

The active-site Proton acceptor; for enolization step is Asp-67. Catalysis depends on Asn-136, which acts as the For ring-opening step. The Proton acceptor; for ring-opening step role is filled by His-138. Glu-143 acts as the For ring-opening step in catalysis.

It belongs to the glucosamine/galactosamine-6-phosphate isomerase family. NagB subfamily.

The catalysed reaction is alpha-D-glucosamine 6-phosphate + H2O = beta-D-fructose 6-phosphate + NH4(+). Its pathway is amino-sugar metabolism; N-acetylneuraminate degradation; D-fructose 6-phosphate from N-acetylneuraminate: step 5/5. Its function is as follows. Catalyzes the reversible isomerization-deamination of glucosamine 6-phosphate (GlcN6P) to form fructose 6-phosphate (Fru6P) and ammonium ion. The protein is Glucosamine-6-phosphate deaminase of Clostridium botulinum (strain 657 / Type Ba4).